A 201-amino-acid chain; its full sequence is Myosin regulatory light chain 2 (201 aa).

The segment at 1–48 (MADKDKKVKKKKAKEDAPAEEAPAAAAPAGDRQSSRGSRKAKRTGSNV) is disordered. Residues 20–29 (EEAPAAAAPA) are compositionally biased toward low complexity. The residue at position 46 (S46) is a Phosphoserine. EF-hand domains follow at residues 55-90 (KQVAEFKEAFQLMDHDKDGIIGKNDLRATFDSLGRL), 125-158 (DEDDVVINAFKTFDEEGKIDSERLRHALMTWGDK), and 159-194 (FSADEVDEAYDQMDIDDKGYIDTTKLIAMLTASAEE). Ca(2+)-binding residues include D68, D70, D72, and D79.

In terms of assembly, myosin is a hexamer of 2 heavy chains and 4 light chains.

This chain is Myosin regulatory light chain 2, found in Bombyx mori (Silk moth).